The following is a 307-amino-acid chain: 4-hydroxythreonine-4-phosphate dehydrogenase (307 aa).

2 residues coordinate substrate: His-126 and Thr-127. Residues His-156, His-195, and His-251 each contribute to the a divalent metal cation site. Substrate-binding residues include Lys-259, Asn-268, and Arg-277.

This sequence belongs to the PdxA family. In terms of assembly, homodimer. It depends on Zn(2+) as a cofactor. Mg(2+) is required as a cofactor. The cofactor is Co(2+).

The protein localises to the cytoplasm. It carries out the reaction 4-(phosphooxy)-L-threonine + NAD(+) = 3-amino-2-oxopropyl phosphate + CO2 + NADH. It participates in cofactor biosynthesis; pyridoxine 5'-phosphate biosynthesis; pyridoxine 5'-phosphate from D-erythrose 4-phosphate: step 4/5. Functionally, catalyzes the NAD(P)-dependent oxidation of 4-(phosphooxy)-L-threonine (HTP) into 2-amino-3-oxo-4-(phosphooxy)butyric acid which spontaneously decarboxylates to form 3-amino-2-oxopropyl phosphate (AHAP). The sequence is that of 4-hydroxythreonine-4-phosphate dehydrogenase from Helicobacter pylori (strain ATCC 700392 / 26695) (Campylobacter pylori).